Consider the following 172-residue polypeptide: Adenine phosphoribosyltransferase (172 aa).

Belongs to the purine/pyrimidine phosphoribosyltransferase family. Homodimer.

Its subcellular location is the cytoplasm. It catalyses the reaction AMP + diphosphate = 5-phospho-alpha-D-ribose 1-diphosphate + adenine. It functions in the pathway purine metabolism; AMP biosynthesis via salvage pathway; AMP from adenine: step 1/1. Functionally, catalyzes a salvage reaction resulting in the formation of AMP, that is energically less costly than de novo synthesis. The sequence is that of Adenine phosphoribosyltransferase from Anaeromyxobacter dehalogenans (strain 2CP-1 / ATCC BAA-258).